A 257-amino-acid polypeptide reads, in one-letter code: Dof zinc finger protein DOF5.3 (257 aa).

The interval 23-50 is disordered; sequence LSYSSNPTPLDNDQKKPSPATAVTRPQP. The span at 24–33 shows a compositional bias: polar residues; the sequence is SYSSNPTPLD. The Dof-type zinc finger occupies 55 to 109; that stretch reads LRCPRCDSTNTKFCYYNNYSLTQPRYFCKSCRRYWTKGGTLRNIPVGGGCRKNKR. Zn(2+) is bound by residues Cys-57, Cys-60, Cys-82, and Cys-85. A disordered region spans residues 104–127; the sequence is CRKNKRSTSSAARSLRTTPEPASH. A compositionally biased stretch (low complexity) spans 110–121; that stretch reads STSSAARSLRTT.

As to expression, the PEAR proteins (e.g. DOF2.4, DOF5.1, DOF3.2, DOF1.1, DOF5.6 and DOF5.3) form a short-range concentration gradient that peaks at protophloem sieve elements (PSE). Accumulates in the stele.

The protein localises to the nucleus. Its function is as follows. Transcription factor that binds specifically to a 5'-AA[AG]G-3' consensus core sequence. The PEAR proteins (e.g. DOF2.4, DOF5.1, DOF3.2, DOF1.1, DOF5.6 and DOF5.3) activate gene expression that promotes radial growth of protophloem sieve elements. The polypeptide is Dof zinc finger protein DOF5.3 (Arabidopsis thaliana (Mouse-ear cress)).